Here is a 252-residue protein sequence, read N- to C-terminus: UPF0273 protein MK0039 (252 aa).

The KaiC domain occupies 4 to 248 (ERVSTGIPGM…VFVKERGEVR (245 aa)). ATP is bound at residue 31 to 38 (GGPGTGKT).

This sequence belongs to the UPF0273 family.

This is UPF0273 protein MK0039 from Methanopyrus kandleri (strain AV19 / DSM 6324 / JCM 9639 / NBRC 100938).